A 155-amino-acid chain; its full sequence is Troponin C, isoform 3 (155 aa).

4 consecutive EF-hand domains span residues 11 to 46, 47 to 82, 87 to 122, and 123 to 155; these read EQIA…MGQP, FDKK…FIVE, AMQK…LDDQ, and LTEQ…MTGE. 5 residues coordinate Ca(2+): Asp-60, Asp-62, Ser-64, Arg-66, and Glu-71. Residues Asp-136, Asp-138, Ser-140, Thr-142, and Glu-147 each contribute to the Ca(2+) site.

The protein belongs to the troponin C family. In terms of tissue distribution, present in both larval and adult muscles.

In Drosophila melanogaster (Fruit fly), this protein is Troponin C, isoform 3 (TpnC73F).